We begin with the raw amino-acid sequence, 400 residues long: CCA-adding enzyme (400 aa).

ATP is bound by residues Gly27 and Arg30. CTP-binding residues include Gly27 and Arg30. 2 residues coordinate Mg(2+): Asp40 and Asp42. ATP contacts are provided by Arg111, Asp154, Arg157, Arg160, and Arg163. 5 residues coordinate CTP: Arg111, Asp154, Arg157, Arg160, and Arg163.

It belongs to the tRNA nucleotidyltransferase/poly(A) polymerase family. Bacterial CCA-adding enzyme type 3 subfamily. In terms of assembly, homodimer. Mg(2+) is required as a cofactor.

The catalysed reaction is a tRNA precursor + 2 CTP + ATP = a tRNA with a 3' CCA end + 3 diphosphate. It carries out the reaction a tRNA with a 3' CCA end + 2 CTP + ATP = a tRNA with a 3' CCACCA end + 3 diphosphate. Its function is as follows. Catalyzes the addition and repair of the essential 3'-terminal CCA sequence in tRNAs without using a nucleic acid template. Adds these three nucleotides in the order of C, C, and A to the tRNA nucleotide-73, using CTP and ATP as substrates and producing inorganic pyrophosphate. tRNA 3'-terminal CCA addition is required both for tRNA processing and repair. Also involved in tRNA surveillance by mediating tandem CCA addition to generate a CCACCA at the 3' terminus of unstable tRNAs. While stable tRNAs receive only 3'-terminal CCA, unstable tRNAs are marked with CCACCA and rapidly degraded. The protein is CCA-adding enzyme of Bacillus pumilus (strain SAFR-032).